The chain runs to 102 residues: Spexin prohormone 1 (102 aa).

An N-terminal signal peptide occupies residues 1-26 (MKDLRTLAAYALALLLLATFVSHSWS). Positions 27-35 (APKGSFQRR) are excised as a propeptide. Q49 carries the post-translational modification Glutamine amide. The propeptide occupies 50–102 (GRRFVSEDRNEGDLYDTIRLESRSQNTENLSISKAAAFLLNILQQARDEDEPY).

This sequence belongs to the spexin family. In terms of tissue distribution, mainly expressed in the brain and ovary. Detected bilaterally in the adult brainstem. Expressed in neurons in the dorsal habenula (dHb). In the dHb some neurons project into the interpeduncular nucleus (IPN) where expression often overlaps with galr2a and galr2b. Weakly expressed in the liver, intestine, kidney, heart and gill.

It localises to the secreted. The protein localises to the extracellular space. The protein resides in the cytoplasmic vesicle. Its subcellular location is the secretory vesicle. Functionally, plays a role in the regulation of food intake and energy metabolism. May also be involved in suppressing the anxiety response by promoting the expression of serotonin-related genes such as fev, tph2 and slc6a4a. Acts as a ligand for galanin receptors galr2a and galr2b. Brain administration of the peptide inhibits food consumption and elevates levels of glucose, triacylglycerol and cholesterol in the serum. Likely to control food intake by regulating appetite related genes which includes the negative regulation of the orexigenic factor agrp. By controlling food intake it may act as a satiety factor in energy metabolism. In Danio rerio (Zebrafish), this protein is Spexin prohormone 1 (spx).